Here is a 115-residue protein sequence, read N- to C-terminus: Cobalt-zinc-cadmium resistance protein CzcI (115 aa).

Residues 1-20 (MRRFVLIFVLLILPFQFSWA) form the signal peptide. Residues 93–102 (QHSSEFSSLN) are compositionally biased toward polar residues. Residues 93-115 (QHSSEFSSLNARAPDRPQWQRLA) form a disordered region.

It localises to the periplasm. Its function is as follows. Component of the czc cation-efflux system that confers resistance to cobalt, zinc and cadmium. May have a regulatory function. The protein is Cobalt-zinc-cadmium resistance protein CzcI (czcI) of Cupriavidus metallidurans (strain ATCC 43123 / DSM 2839 / NBRC 102507 / CH34) (Ralstonia metallidurans).